Here is a 375-residue protein sequence, read N- to C-terminus: Citrate synthase (375 aa).

Residues His266 and Asp317 contribute to the active site.

The protein belongs to the citrate synthase family. As to quaternary structure, homohexamer.

The catalysed reaction is oxaloacetate + acetyl-CoA + H2O = citrate + CoA + H(+). It participates in carbohydrate metabolism; tricarboxylic acid cycle; isocitrate from oxaloacetate: step 1/2. Its activity is regulated as follows. Allosterically inhibited by NADH. This Mycolicibacterium smegmatis (Mycobacterium smegmatis) protein is Citrate synthase (gltA).